Consider the following 202-residue polypeptide: Holliday junction branch migration complex subunit RuvA (202 aa).

The interval 1–64 (MIDYVSGTLV…EDDESLYGFA (64 aa)) is domain I. The segment at 65–143 (TKAERTVFET…DLDVLEDTSP (79 aa)) is domain II. The flexible linker stretch occupies residues 144–149 (LSGGSD). Residues 150–202 (ARAEARADALEALTELGLSKADAERSIRQVLRDNAGIQSADELVRRALKADQE) form a domain III region.

The protein belongs to the RuvA family. Homotetramer. Forms an RuvA(8)-RuvB(12)-Holliday junction (HJ) complex. HJ DNA is sandwiched between 2 RuvA tetramers; dsDNA enters through RuvA and exits via RuvB. An RuvB hexamer assembles on each DNA strand where it exits the tetramer. Each RuvB hexamer is contacted by two RuvA subunits (via domain III) on 2 adjacent RuvB subunits; this complex drives branch migration. In the full resolvosome a probable DNA-RuvA(4)-RuvB(12)-RuvC(2) complex forms which resolves the HJ.

It is found in the cytoplasm. In terms of biological role, the RuvA-RuvB-RuvC complex processes Holliday junction (HJ) DNA during genetic recombination and DNA repair, while the RuvA-RuvB complex plays an important role in the rescue of blocked DNA replication forks via replication fork reversal (RFR). RuvA specifically binds to HJ cruciform DNA, conferring on it an open structure. The RuvB hexamer acts as an ATP-dependent pump, pulling dsDNA into and through the RuvAB complex. HJ branch migration allows RuvC to scan DNA until it finds its consensus sequence, where it cleaves and resolves the cruciform DNA. The sequence is that of Holliday junction branch migration complex subunit RuvA from Salinibacter ruber (strain DSM 13855 / M31).